The sequence spans 746 residues: Probably inactive copalyl diphosphate synthase 3 (746 aa).

The DXDD motif; degenerated motif lies at 331 to 334; sequence DVND.

Belongs to the terpene synthase family. Tpsc subfamily. As to expression, mostly expressed in stems, and, at low levels, in roots and leaves, but barely in flowers.

In Isodon rubescens (Rabdosia rubescens), this protein is Probably inactive copalyl diphosphate synthase 3.